The primary structure comprises 344 residues: Serpentine receptor class H-72 (344 aa).

The next 7 membrane-spanning stretches (helical) occupy residues 30–50 (GLAF…FFTG), 66–86 (LSLV…SFFI), 110–132 (TVVQ…TLLF), 155–175 (WLAG…FNLA), 221–241 (SIYM…LVIV), 259–279 (YGLI…SVLI), and 292–312 (LVSI…LLVH).

Belongs to the nematode receptor-like protein srh family.

It localises to the membrane. The polypeptide is Serpentine receptor class H-72 (srh-72) (Caenorhabditis elegans).